The chain runs to 146 residues: Large-conductance mechanosensitive channel (146 aa).

The next 2 membrane-spanning stretches (helical) occupy residues 14-34 and 81-101; these read VLDL…VNSL and GLFL…FLLV.

Belongs to the MscL family. As to quaternary structure, homopentamer.

The protein localises to the cell membrane. Its function is as follows. Channel that opens in response to stretch forces in the membrane lipid bilayer. May participate in the regulation of osmotic pressure changes within the cell. The sequence is that of Large-conductance mechanosensitive channel from Symbiobacterium thermophilum (strain DSM 24528 / JCM 14929 / IAM 14863 / T).